A 275-amino-acid chain; its full sequence is Calcium-binding protein 4 (275 aa).

Over residues 1–12 (MTTEQARGQQGP) the composition is skewed to polar residues. A disordered region spans residues 1–112 (MTTEQARGQQ…SLHDAAQRTY (112 aa)). A compositionally biased stretch (basic residues) spans 38-55 (TRKRSKKERGLRGSRKRT). Ser42 bears the Phosphoserine mark. EF-hand domains follow at residues 129–164 (EELDELQAAFEEFDTDRDGYISHRELGDCMRTLGYM), 183–200 (GRVDFEEFVELIGPKLRE), 206–241 (LGVRELRIAFREFDRDRDGRITVAELREAVPALLGE), and 243–275 (LAGPELDEMLREVDLNGDGTVDFDEFVMMLSRH). Ca(2+) contacts are provided by Asp142, Asp144, Asp146, Tyr148, and Glu153. Residues Asp219, Asp221, Asp223, Arg225, Glu230, Asp256, Asn258, Asp260, Thr262, and Glu267 each contribute to the Ca(2+) site.

Interacts with CACNA1F and CACNA1D (via IQ domain) in a calcium independent manner. Interacts (via N-terminus) with UNC119. In terms of processing, phosphorylated. Phosphorylation levels change with the light conditions and regulate the activity. As to expression, expressed in retina and in the inner hair cells (IHC) of the cochlea.

It is found in the cytoplasm. Its subcellular location is the presynapse. Functionally, involved in normal synaptic function through regulation of Ca(2+) influx and neurotransmitter release in photoreceptor synaptic terminals and in auditory transmission. Modulator of CACNA1D and CACNA1F, suppressing the calcium-dependent inactivation and shifting the activation range to more hyperpolarized voltages. This is Calcium-binding protein 4 (CABP4) from Homo sapiens (Human).